Consider the following 338-residue polypeptide: Ferrochelatase (338 aa).

Fe cation contacts are provided by histidine 207 and glutamate 293.

The protein belongs to the ferrochelatase family.

Its subcellular location is the cytoplasm. It catalyses the reaction heme b + 2 H(+) = protoporphyrin IX + Fe(2+). It participates in porphyrin-containing compound metabolism; protoheme biosynthesis; protoheme from protoporphyrin-IX: step 1/1. In terms of biological role, catalyzes the ferrous insertion into protoporphyrin IX. This Shewanella denitrificans (strain OS217 / ATCC BAA-1090 / DSM 15013) protein is Ferrochelatase.